We begin with the raw amino-acid sequence, 887 residues long: Alanine--tRNA ligase (887 aa).

The Zn(2+) site is built by H563, H567, C677, and H681.

It belongs to the class-II aminoacyl-tRNA synthetase family. Zn(2+) is required as a cofactor.

Its subcellular location is the cytoplasm. It carries out the reaction tRNA(Ala) + L-alanine + ATP = L-alanyl-tRNA(Ala) + AMP + diphosphate. Its function is as follows. Catalyzes the attachment of alanine to tRNA(Ala) in a two-step reaction: alanine is first activated by ATP to form Ala-AMP and then transferred to the acceptor end of tRNA(Ala). Also edits incorrectly charged Ser-tRNA(Ala) and Gly-tRNA(Ala) via its editing domain. This chain is Alanine--tRNA ligase, found in Dinoroseobacter shibae (strain DSM 16493 / NCIMB 14021 / DFL 12).